The chain runs to 367 residues: Flagellar P-ring protein (367 aa).

A signal peptide spans 1–21 (MYVFKALAGIVLALVATLAHA).

Belongs to the FlgI family. In terms of assembly, the basal body constitutes a major portion of the flagellar organelle and consists of four rings (L,P,S, and M) mounted on a central rod.

The protein resides in the periplasm. The protein localises to the bacterial flagellum basal body. Assembles around the rod to form the L-ring and probably protects the motor/basal body from shearing forces during rotation. The sequence is that of Flagellar P-ring protein from Salmonella arizonae (strain ATCC BAA-731 / CDC346-86 / RSK2980).